A 93-amino-acid chain; its full sequence is Small ribosomal subunit protein uS19 (93 aa).

Belongs to the universal ribosomal protein uS19 family.

Protein S19 forms a complex with S13 that binds strongly to the 16S ribosomal RNA. This is Small ribosomal subunit protein uS19 (rpsS) from Helicobacter pylori (strain ATCC 700392 / 26695) (Campylobacter pylori).